The chain runs to 150 residues: Globin-2 (150 aa).

The region spanning 11 to 150 (PLSDAEKNKI…MICILLSSAY (140 aa)) is the Globin domain. Heme b-binding residues include H74 and H106.

This sequence belongs to the globin family. In terms of assembly, monomer.

The polypeptide is Globin-2 (Mordacia mordax (Southern hemisphere lamprey)).